We begin with the raw amino-acid sequence, 386 residues long: Patatin-15 (386 aa).

The N-terminal stretch at 1 to 23 (MATTKSFLILFFMILATTSSTCA) is a signal peptide. One can recognise a PNPLA domain in the interval 32 to 229 (LSIDGGGIKG…TVGDPALLSL (198 aa)). Residues 36–41 (GGGIKG) carry the GXGXXG motif. A GXSXG motif is present at residues 75–79 (GTSTG). The Nucleophile role is filled by Ser77. Asn115 carries N-linked (GlcNAc...) asparagine glycosylation. Asp215 (proton acceptor) is an active-site residue. The short motif at 215–217 (DGG) is the DGA/G element. A coiled-coil region spans residues 321 to 384 (ENALTGTTTE…DRKKLRANKA (64 aa)).

It belongs to the patatin family. As to expression, tuber.

The protein localises to the vacuole. Its function is as follows. Probable lipolytic acyl hydrolase (LAH), an activity which is thought to be involved in the response of tubers to pathogens. This is Patatin-15 from Solanum tuberosum (Potato).